The primary structure comprises 423 residues: Probable sucrose-phosphatase 3b (423 aa).

It belongs to the sucrose phosphatase family. Homodimer. Mg(2+) serves as cofactor.

The catalysed reaction is sucrose 6(F)-phosphate + H2O = sucrose + phosphate. It participates in glycan biosynthesis; sucrose biosynthesis; sucrose from D-fructose 6-phosphate and UDP-alpha-D-glucose: step 2/2. Catalyzes the final step of sucrose synthesis. In Arabidopsis thaliana (Mouse-ear cress), this protein is Probable sucrose-phosphatase 3b (SPP3B).